Consider the following 272-residue polypeptide: Acetylglutamate kinase (272 aa).

Residues 46–47 (GA), Arg68, and Asn166 contribute to the substrate site.

The protein belongs to the acetylglutamate kinase family. ArgB subfamily.

It localises to the cytoplasm. It catalyses the reaction N-acetyl-L-glutamate + ATP = N-acetyl-L-glutamyl 5-phosphate + ADP. It functions in the pathway amino-acid biosynthesis; L-arginine biosynthesis; N(2)-acetyl-L-ornithine from L-glutamate: step 2/4. Catalyzes the ATP-dependent phosphorylation of N-acetyl-L-glutamate. The protein is Acetylglutamate kinase of Dehalococcoides mccartyi (strain ATCC BAA-2266 / KCTC 15142 / 195) (Dehalococcoides ethenogenes (strain 195)).